Consider the following 503-residue polypeptide: Cytochrome P450 3A15 (503 aa).

Cys-442 contributes to the heme binding site.

The protein belongs to the cytochrome P450 family. Heme serves as cofactor.

The protein resides in the endoplasmic reticulum membrane. It is found in the microsome membrane. The enzyme catalyses an organic molecule + reduced [NADPH--hemoprotein reductase] + O2 = an alcohol + oxidized [NADPH--hemoprotein reductase] + H2O + H(+). Functionally, cytochromes P450 are a group of heme-thiolate monooxygenases. In liver microsomes, this enzyme is involved in an NADPH-dependent electron transport pathway. It oxidizes a variety of structurally unrelated compounds, including steroids, fatty acids, and xenobiotics. This Cavia porcellus (Guinea pig) protein is Cytochrome P450 3A15 (CYP3A15).